The chain runs to 322 residues: tRNA uridine(34) hydroxylase (322 aa).

One can recognise a Rhodanese domain in the interval 125–219 (QDPNTIVIDA…YGKDPEVQGK (95 aa)). C179 functions as the Cysteine persulfide intermediate in the catalytic mechanism.

Belongs to the TrhO family.

The enzyme catalyses uridine(34) in tRNA + AH2 + O2 = 5-hydroxyuridine(34) in tRNA + A + H2O. Its function is as follows. Catalyzes oxygen-dependent 5-hydroxyuridine (ho5U) modification at position 34 in tRNAs. The protein is tRNA uridine(34) hydroxylase of Bacillus subtilis (strain 168).